Consider the following 806-residue polypeptide: Polyribonucleotide nucleotidyltransferase (806 aa).

The Mg(2+) site is built by aspartate 488 and aspartate 494. The KH domain maps to 555–614 (PQIRTVQIPTDKIRDLIGPGGKTIRGIIEATQVKIDVDDTGRVNIASSDEEGLKKALAMI). The region spanning 624–691 (GKTYLGKVVR…EGNRIKLSRK (68 aa)) is the S1 motif domain. The segment at 698–806 (RQKLGLPEPG…QGGGGNRGPQ (109 aa)) is disordered. Low complexity predominate over residues 704–717 (PEPGAEAPAAAEGQ). Acidic residues predominate over residues 738–757 (GGEDFDDFDEEGGEGEGEDE). A compositionally biased stretch (basic and acidic residues) spans 758–774 (NFNREDTPNSAPGERRP). The segment covering 783–792 (RGRRRRRGRG) has biased composition (basic residues). The segment covering 793 to 806 (RGPGQGGGGNRGPQ) has biased composition (gly residues).

Belongs to the polyribonucleotide nucleotidyltransferase family. Requires Mg(2+) as cofactor.

It localises to the cytoplasm. It catalyses the reaction RNA(n+1) + phosphate = RNA(n) + a ribonucleoside 5'-diphosphate. In terms of biological role, involved in mRNA degradation. Catalyzes the phosphorolysis of single-stranded polyribonucleotides processively in the 3'- to 5'-direction. This chain is Polyribonucleotide nucleotidyltransferase, found in Acidobacterium capsulatum (strain ATCC 51196 / DSM 11244 / BCRC 80197 / JCM 7670 / NBRC 15755 / NCIMB 13165 / 161).